The chain runs to 576 residues: Proline--tRNA ligase (576 aa).

It belongs to the class-II aminoacyl-tRNA synthetase family. ProS type 1 subfamily. As to quaternary structure, homodimer.

The protein resides in the cytoplasm. It carries out the reaction tRNA(Pro) + L-proline + ATP = L-prolyl-tRNA(Pro) + AMP + diphosphate. Its function is as follows. Catalyzes the attachment of proline to tRNA(Pro) in a two-step reaction: proline is first activated by ATP to form Pro-AMP and then transferred to the acceptor end of tRNA(Pro). As ProRS can inadvertently accommodate and process non-cognate amino acids such as alanine and cysteine, to avoid such errors it has two additional distinct editing activities against alanine. One activity is designated as 'pretransfer' editing and involves the tRNA(Pro)-independent hydrolysis of activated Ala-AMP. The other activity is designated 'posttransfer' editing and involves deacylation of mischarged Ala-tRNA(Pro). The misacylated Cys-tRNA(Pro) is not edited by ProRS. The sequence is that of Proline--tRNA ligase from Magnetococcus marinus (strain ATCC BAA-1437 / JCM 17883 / MC-1).